The following is a 1412-amino-acid chain: Erbin (1412 aa).

LRR repeat units follow at residues 23 to 44, 47 to 68, 70 to 91, 93 to 114, 116 to 137, 139 to 161, 162 to 183, 185 to 206, 208 to 229, 231 to 252, 254 to 275, 277 to 298, 300 to 321, 323 to 344, 346 to 367, 369 to 391, and 392 to 413; these read TVTT…IFTF, TLEE…LFNC, SLHK…IANL, NLRE…IKNC, VLTI…FSQL, NLTQ…GRLT, KLQI…MNRL, QLER…LEQL, GLKE…IGSL, QLTY…ISTC, NLQD…IGSL, NITT…IGGL, SVEE…IGQL, NLRT…IGSW, NITV…MGDM, KLKV…TKLQ, and QLTA…QKET. Phosphoserine is present on residues serine 440 and serine 444. 2 disordered regions span residues 464 to 489 and 506 to 542; these read CDED…PYPD and KDEE…TTTV. Residues 470–480 show a composition bias toward basic and acidic residues; the sequence is EREAPPREGNL. Phosphotyrosine is present on tyrosine 483. At threonine 485 the chain carries Phosphothreonine. Residues 506-532 show a composition bias toward basic and acidic residues; it reads KDEETNEDSGRDLKPHEDQQDINKDVG. Positions 533–542 are enriched in low complexity; it reads VKTSESTTTV. 5 positions are modified to phosphoserine: serine 569, serine 598, serine 602, serine 603, and serine 620. Positions 615 to 681 are disordered; it reads PLIETSINQP…TDSSQDTSLC (67 aa). Over residues 632–641 the composition is skewed to basic and acidic residues; the sequence is NKKDDTKETD. Residues 650–662 are compositionally biased toward low complexity; sequence NSNQNNSNCSSPS. Polar residues predominate over residues 663-681; the sequence is RMSDSVSLNTDSSQDTSLC. Serine 715 bears the Phosphoserine mark. The segment at 803–867 is disordered; the sequence is ETEHLENGNK…PQKSGPVGSV (65 aa). Polar residues predominate over residues 817-835; it reads ESVNKVNGHSEETSQSPNR. Phosphoserine is present on residues serine 852, serine 857, and serine 872. Threonine 917 carries the phosphothreonine modification. Tyrosine 920 is modified (phosphotyrosine). Serine 931 is subject to Phosphoserine. Residue tyrosine 972 is modified to Phosphotyrosine. Disordered stretches follow at residues 997 to 1021 and 1075 to 1192; these read NPQI…NQSY and QRQS…KSKV. The span at 1075–1086 shows a compositional bias: polar residues; it reads QRQSSVSSTASV. Tyrosine 1104 is modified (phosphotyrosine). Residues 1157–1171 show a composition bias toward polar residues; sequence MSVSDFNYSRTSPSK. 3 positions are modified to phosphoserine: serine 1158, serine 1179, and serine 1286. The 90-residue stretch at 1321 to 1410 folds into the PDZ domain; that stretch reads EIRVRVEKDP…TVELIIVREV (90 aa).

This sequence belongs to the LAP (LRR and PDZ) protein family. As to quaternary structure, interacts with ERBB2, BPAG1 and ITGB4. May favor the localization of ERBB2, by restricting its presence to the basolateral membrane of epithelial cells. Also found to interact with ARVCF and delta catenin. Interacts (via C-terminus) with DST Isoform 3 (via N-terminus). Interacts with NOD2 (via CARD domain). In terms of tissue distribution, highly expressed in brain, heart, kidney, muscle and stomach, followed by liver, spleen and intestine.

It is found in the cell junction. The protein localises to the hemidesmosome. The protein resides in the nucleus membrane. Its subcellular location is the basolateral cell membrane. Its function is as follows. Acts as an adapter for the receptor ERBB2, in epithelia. By binding the unphosphorylated 'Tyr-1248' of receptor ERBB2, it may contribute to stabilize this unphosphorylated state. Inhibits NOD2-dependent NF-kappa-B signaling and pro-inflammatory cytokine secretion. The polypeptide is Erbin (Homo sapiens (Human)).